The following is a 183-amino-acid chain: uncharacterized protein (183 aa).

An N-terminal signal peptide occupies residues 1–29 (MQCWQQPFLRFLQQPFFLATASLAGSSSS). The tract at residues 149–183 (PGSTCDGSLKGRAYPSCVPKRDPEHSREESHPLSG) is disordered. Basic and acidic residues predominate over residues 167-183 (PKRDPEHSREESHPLSG).

The protein localises to the secreted. This is an uncharacterized protein from Homo sapiens (Human).